Consider the following 955-residue polypeptide: MADPAECSIKVMCRFRPLNEAEILRGDKFIPKFKGEETVVIGQGKPYVFDRVLPPNTTQEQVYNACAKQIVKDVLEGYNGTIFAYGQTSSGKTHTMEGKLHDPQLMGIIPRIAHDIFDHIYSMDENLEFHIKVSYFEIYLDKIRDLLDVSKTNLAVHEDKNRVPYVKGCTERFVSSPEEVMDVIDEGKANRHVAVTNMNEHSSRSHSIFLINIKQENVETEKKLSGKLYLVDLAGSEKVSKTGAEGAVLDEAKNINKSLSALGNVISALAEGTKTHVPYRDSKMTRILQDSLGGNCRTTIVICCSPSVFNEAETKSTLMFGQRAKTIKNTVSVNLELTAEEWKKKYEKEKEKNKALKSVIQHLEVELNRWRNGEAVPEDEQISAKDQKNLEPCDNTPIIDNITPVVDGISAEKEKYDEEITSLYRQLDDKDDEINQQSQLAEKLKQQMLDQDELLASTRRDYEKIQEELTRLQIENEAAKDEVKEVLQALEELAVNYDQKSQEVEDKTRANEQLTDELAQKTTTLTTTQRELSQLQELSNHQKKRATEILNLLLKDLGEIGGIIGTNDVKTLADVNGVIEEEFTMARLYISKMKSEVKSLVNRSKQLESAQTDSNRKMNASERELAACQLLISQHEAKIKSLTDYMQNMEQKRRQLEESQDSLSEELAKLRAQEKMHEVSFQDKEKEHLTRLQDAEEVKKALEQQMESHREAHQKQLSRLRDEIEEKQRIIDEIRDLNQKLQLEQERLSSDYNKLKIEDQEREVKLEKLLLLNDKREQAREDLKGLEETVSRELQTLHNLRKLFVQDLTTRVKKSVELDSDDGGGSAAQKQKISFLENNLEQLTKVHKQLVRDNADLRCELPKLEKRLRATAERVKALESALKEAKENAMRDRKRYQQEVDRIKEAVRAKNMARRAHSAQIAKPIRPGHYPASSPTAVHAVRGGGGSSNSTHYQK.

The 320-residue stretch at 8 to 327 (SIKVMCRFRP…LMFGQRAKTI (320 aa)) folds into the Kinesin motor domain. ATP-binding residues include Q87, S89, S90, G91, K92, T93, H94, and K99. Residues 174-315 (VSSPEEVMDV…PSVFNEAETK (142 aa)) form a microtubule-binding region. The stretch at 332–366 (SVNLELTAEEWKKKYEKEKEKNKALKSVIQHLEVE) forms a coiled coil. T403 is modified (phosphothreonine). Coiled-coil stretches lie at residues 413-538 (KEKY…LQEL) and 590-913 (ISKM…KNMA). The interval 859–955 (CELPKLEKRL…GSSNSTHYQK (97 aa)) is globular. The interval 909-955 (AKNMARRAHSAQIAKPIRPGHYPASSPTAVHAVRGGGGSSNSTHYQK) is disordered.

This sequence belongs to the TRAFAC class myosin-kinesin ATPase superfamily. Kinesin family. Kinesin subfamily. In terms of assembly, oligomer composed of two heavy chains and two light chains. Interacts with GRIP1. Interacts with TRAK1. Interacts with ZFYVE27. Interacts with KLC3.

It localises to the cytoplasm. The protein localises to the cytoskeleton. The protein resides in the cell projection. It is found in the dendrite. The enzyme catalyses ATP + H2O = ADP + phosphate + H(+). Its function is as follows. Microtubule-associated force-producing protein that may play a role in organelle transport. Has ATPase activity. Involved in synaptic transmission. Mediates dendritic trafficking of mRNAs. Required for anterograde axonal transportation of MAPK8IP3/JIP3 which is essential for MAPK8IP3/JIP3 function in axon elongation. The sequence is that of Kinesin heavy chain isoform 5C (Kif5c) from Rattus norvegicus (Rat).